Reading from the N-terminus, the 395-residue chain is 8-amino-7-oxononanoate synthase/2-amino-3-ketobutyrate coenzyme A ligase (395 aa).

110-111 is a pyridoxal 5'-phosphate binding site; the sequence is GF. Residue His-135 participates in substrate binding. Residues Ser-182, 207 to 210, and 239 to 242 each bind pyridoxal 5'-phosphate; these read DDAH and TLSK. At Lys-242 the chain carries N6-(pyridoxal phosphate)lysine. Thr-356 contributes to the substrate binding site.

Belongs to the class-II pyridoxal-phosphate-dependent aminotransferase family. As to quaternary structure, homodimer. The cofactor is pyridoxal 5'-phosphate.

It catalyses the reaction 6-carboxyhexanoyl-[ACP] + L-alanine + H(+) = (8S)-8-amino-7-oxononanoate + holo-[ACP] + CO2. The enzyme catalyses glycine + acetyl-CoA = (2S)-2-amino-3-oxobutanoate + CoA. It functions in the pathway cofactor biosynthesis; biotin biosynthesis. Functionally, catalyzes the decarboxylative condensation of pimeloyl-[acyl-carrier protein] and L-alanine to produce 8-amino-7-oxononanoate (AON), [acyl-carrier protein], and carbon dioxide. Can also use pimeloyl-CoA instead of pimeloyl-ACP as substrate. It also converts 2-amino-3-ketobutyrate and CoA to glycine and acetyl-CoA. Activity is also observed with the following combinations of substrates: acetyl-CoA and either L-alanine or L-serine, pimeloyl-CoA and either glycine or L-serine, and palmitoyl-CoA with L-alanine. This Thermus thermophilus (strain ATCC 27634 / DSM 579 / HB8) protein is 8-amino-7-oxononanoate synthase/2-amino-3-ketobutyrate coenzyme A ligase.